We begin with the raw amino-acid sequence, 982 residues long: Glycine dehydrogenase (decarboxylating) (982 aa).

Lys721 is modified (N6-(pyridoxal phosphate)lysine).

Belongs to the GcvP family. In terms of assembly, the glycine cleavage system is composed of four proteins: P, T, L and H. It depends on pyridoxal 5'-phosphate as a cofactor.

It carries out the reaction N(6)-[(R)-lipoyl]-L-lysyl-[glycine-cleavage complex H protein] + glycine + H(+) = N(6)-[(R)-S(8)-aminomethyldihydrolipoyl]-L-lysyl-[glycine-cleavage complex H protein] + CO2. Functionally, the glycine cleavage system catalyzes the degradation of glycine. The P protein binds the alpha-amino group of glycine through its pyridoxal phosphate cofactor; CO(2) is released and the remaining methylamine moiety is then transferred to the lipoamide cofactor of the H protein. The protein is Glycine dehydrogenase (decarboxylating) of Prochlorococcus marinus (strain MIT 9303).